A 187-amino-acid chain; its full sequence is MGTFLLLMAEASAVGGELAEGGAEGGFGLNTNILDTNLINLAIIITVLFVFGRKVLGNTLKTRRENIETAIKNAEQRAADAAKQLKEAQQKLEQAQAEAERIKKSAQDNAQTAGQAILAQAAVDIERLQEAGAADLNAELDRAIAQLRQRVVALALQKVESELQGGIADDAQKILIDRSIAQLGGEV.

A helical transmembrane segment spans residues 32–52 (NILDTNLINLAIIITVLFVFG).

The protein belongs to the ATPase B chain family. In terms of assembly, F-type ATPases have 2 components, F(1) - the catalytic core - and F(0) - the membrane proton channel. F(1) has five subunits: alpha(3), beta(3), gamma(1), delta(1), epsilon(1). F(0) has four main subunits: a(1), b(1), b'(1) and c(10-14). The alpha and beta chains form an alternating ring which encloses part of the gamma chain. F(1) is attached to F(0) by a central stalk formed by the gamma and epsilon chains, while a peripheral stalk is formed by the delta, b and b' chains.

Its subcellular location is the cellular thylakoid membrane. Its function is as follows. F(1)F(0) ATP synthase produces ATP from ADP in the presence of a proton or sodium gradient. F-type ATPases consist of two structural domains, F(1) containing the extramembraneous catalytic core and F(0) containing the membrane proton channel, linked together by a central stalk and a peripheral stalk. During catalysis, ATP synthesis in the catalytic domain of F(1) is coupled via a rotary mechanism of the central stalk subunits to proton translocation. Functionally, component of the F(0) channel, it forms part of the peripheral stalk, linking F(1) to F(0). This is ATP synthase subunit b from Trichormus variabilis (strain ATCC 29413 / PCC 7937) (Anabaena variabilis).